The following is a 351-amino-acid chain: Ferredoxin--NADP reductase (351 aa).

The FAD site is built by threonine 14, aspartate 33, glutamine 41, tyrosine 46, alanine 86, phenylalanine 121, aspartate 287, and threonine 328.

Belongs to the ferredoxin--NADP reductase type 2 family. Homodimer. The cofactor is FAD.

It carries out the reaction 2 reduced [2Fe-2S]-[ferredoxin] + NADP(+) + H(+) = 2 oxidized [2Fe-2S]-[ferredoxin] + NADPH. The chain is Ferredoxin--NADP reductase from Flavobacterium psychrophilum (strain ATCC 49511 / DSM 21280 / CIP 103535 / JIP02/86).